The following is a 383-amino-acid chain: Glutamyl-tRNA reductase (383 aa).

Residues 38–41 (TCNR), S82, 87–89 (EDQ), and Q93 each bind substrate. C39 functions as the Nucleophile in the catalytic mechanism. 161 to 166 (GAGEIA) provides a ligand contact to NADP(+).

The protein belongs to the glutamyl-tRNA reductase family. In terms of assembly, homodimer.

It catalyses the reaction (S)-4-amino-5-oxopentanoate + tRNA(Glu) + NADP(+) = L-glutamyl-tRNA(Glu) + NADPH + H(+). The protein operates within porphyrin-containing compound metabolism; protoporphyrin-IX biosynthesis; 5-aminolevulinate from L-glutamyl-tRNA(Glu): step 1/2. Its function is as follows. Catalyzes the NADPH-dependent reduction of glutamyl-tRNA(Glu) to glutamate 1-semialdehyde (GSA). The polypeptide is Glutamyl-tRNA reductase (Methanococcus aeolicus (strain ATCC BAA-1280 / DSM 17508 / OCM 812 / Nankai-3)).